An 82-amino-acid chain; its full sequence is UPF0180 protein BC_1394 (82 aa).

Belongs to the UPF0180 family.

The sequence is that of UPF0180 protein BC_1394 from Bacillus cereus (strain ATCC 14579 / DSM 31 / CCUG 7414 / JCM 2152 / NBRC 15305 / NCIMB 9373 / NCTC 2599 / NRRL B-3711).